An 879-amino-acid chain; its full sequence is Leucine--tRNA ligase (879 aa).

Residues 45 to 55 (PYPSGALHMGH) carry the 'HIGH' region motif. Residues 637 to 641 (KMSKS) carry the 'KMSKS' region motif. Lys-640 serves as a coordination point for ATP.

It belongs to the class-I aminoacyl-tRNA synthetase family.

The protein localises to the cytoplasm. It catalyses the reaction tRNA(Leu) + L-leucine + ATP = L-leucyl-tRNA(Leu) + AMP + diphosphate. The protein is Leucine--tRNA ligase of Xylella fastidiosa (strain M12).